Reading from the N-terminus, the 191-residue chain is Classical arabinogalactan protein 9 (191 aa).

The first 20 residues, 1–20 (MARSFAIAVICIVLIAGVTG), serve as a signal peptide directing secretion. Residues 20–172 (GQAPTSPPTA…SPTDVNDQNG (153 aa)) are disordered. Gln-21 carries the pyrrolidone carboxylic acid modification. Residues Pro-23, Pro-26, Pro-27, Pro-31, and Pro-33 each carry the 4-hydroxyproline modification. The segment covering 24 to 146 (TSPPTATPAP…PSPSSSPPLP (123 aa)) has biased composition (pro residues). 4 O-linked (Ara...) hydroxyproline glycosylation sites follow: Pro-26, Pro-27, Pro-31, and Pro-33. Residues 155-172 (TDSISPAPSPTDVNDQNG) are compositionally biased toward polar residues. The GPI-anchor amidated glycine moiety is linked to residue Gly-172. A propeptide spans 173 to 191 (ASKMVSSLVFGSVLVWFMI) (removed in mature form).

The protein belongs to the classical AGP family. In terms of processing, O-glycosylated on hydroxyprolines; noncontiguous hydroxylproline residues are glycosylated with arabinogalactan. Predominantly expressed in flowers and at a lower level in leaves and siliques.

The protein resides in the cell membrane. Its function is as follows. Proteoglycan that seems to be implicated in diverse developmental roles such as differentiation, cell-cell recognition, embryogenesis and programmed cell death. This Arabidopsis thaliana (Mouse-ear cress) protein is Classical arabinogalactan protein 9 (AGP9).